Here is a 369-residue protein sequence, read N- to C-terminus: UDP-3-O-acylglucosamine N-acyltransferase (369 aa).

The Proton acceptor role is filled by H263.

Belongs to the transferase hexapeptide repeat family. LpxD subfamily. As to quaternary structure, homotrimer.

The catalysed reaction is a UDP-3-O-[(3R)-3-hydroxyacyl]-alpha-D-glucosamine + a (3R)-hydroxyacyl-[ACP] = a UDP-2-N,3-O-bis[(3R)-3-hydroxyacyl]-alpha-D-glucosamine + holo-[ACP] + H(+). It participates in bacterial outer membrane biogenesis; LPS lipid A biosynthesis. Catalyzes the N-acylation of UDP-3-O-acylglucosamine using 3-hydroxyacyl-ACP as the acyl donor. Is involved in the biosynthesis of lipid A, a phosphorylated glycolipid that anchors the lipopolysaccharide to the outer membrane of the cell. In Burkholderia ambifaria (strain MC40-6), this protein is UDP-3-O-acylglucosamine N-acyltransferase.